A 419-amino-acid chain; its full sequence is Tol-Pal system protein TolB (419 aa).

The first 19 residues, 1-19 (MFNRIISLFLLLFTGQVIA), serve as a signal peptide directing secretion.

This sequence belongs to the TolB family. The Tol-Pal system is composed of five core proteins: the inner membrane proteins TolA, TolQ and TolR, the periplasmic protein TolB and the outer membrane protein Pal. They form a network linking the inner and outer membranes and the peptidoglycan layer.

It is found in the periplasm. Part of the Tol-Pal system, which plays a role in outer membrane invagination during cell division and is important for maintaining outer membrane integrity. The chain is Tol-Pal system protein TolB from Legionella pneumophila subsp. pneumophila (strain Philadelphia 1 / ATCC 33152 / DSM 7513).